The sequence spans 397 residues: Imidazolonepropionase (397 aa).

Fe(3+) is bound by residues His66 and His68. Residues His66 and His68 each coordinate Zn(2+). 4-imidazolone-5-propanoate is bound by residues Arg75, Tyr138, and His171. Tyr138 is an N-formimidoyl-L-glutamate binding site. His236 provides a ligand contact to Fe(3+). His236 provides a ligand contact to Zn(2+). Position 239 (Gln239) interacts with 4-imidazolone-5-propanoate. Asp311 provides a ligand contact to Fe(3+). Residue Asp311 coordinates Zn(2+). N-formimidoyl-L-glutamate is bound by residues Asn313 and Gly315. 4-imidazolone-5-propanoate is bound at residue Ser316.

It belongs to the metallo-dependent hydrolases superfamily. HutI family. Zn(2+) serves as cofactor. It depends on Fe(3+) as a cofactor.

It is found in the cytoplasm. The catalysed reaction is 4-imidazolone-5-propanoate + H2O = N-formimidoyl-L-glutamate. Its pathway is amino-acid degradation; L-histidine degradation into L-glutamate; N-formimidoyl-L-glutamate from L-histidine: step 3/3. Catalyzes the hydrolytic cleavage of the carbon-nitrogen bond in imidazolone-5-propanoate to yield N-formimidoyl-L-glutamate. It is the third step in the universal histidine degradation pathway. The protein is Imidazolonepropionase of Roseobacter denitrificans (strain ATCC 33942 / OCh 114) (Erythrobacter sp. (strain OCh 114)).